We begin with the raw amino-acid sequence, 316 residues long: MQRCSVVAALAGVVFLAQACSLSTPSRITHTDKLPVVVTFNALKELTQMVGGEKIHLVSIVPDGVDSHDFEPKAKHMAFISDAKVIVYNGLGMEPWIHSVLHAARNSGSIRVEAAQGIVPLKAHTRGHTAHHVHAHASHGSAYDPHVWLSVCNAQTMLRTIGKALCKADPQHTRFYKRNARNAAARLEALYKEYRSKFAALSHRYFVTTHAAFGYLCRDFDLQQKSIKDVFNTEEPSIKRLVELVEFSKKHSVRTIFSERGPSEKVARVLAQEIGASVETIYTMEKNEENLSYYERMKHNINRIYRACSKQVTPSQ.

A signal peptide spans 1 to 19; the sequence is MQRCSVVAALAGVVFLAQA. Positions 68, 146, and 210 each coordinate a divalent metal cation.

Belongs to the bacterial solute-binding protein 9 family.

The protein localises to the periplasm. In terms of biological role, part of an ATP-binding cassette (ABC) transport system involved in metal import. Binds a metal with high affinity and specificity and delivers it to the membrane permease for translocation into the cytoplasm. This Treponema pallidum (strain Nichols) protein is Putative metal-binding protein TP_0034.